A 350-amino-acid polypeptide reads, in one-letter code: Probable 2-dehydropantoate 2-reductase (350 aa).

NADP(+) is bound by residues G9–G14 and N115. N115 is a binding site for substrate. K213 serves as the catalytic Proton donor. The substrate site is built by N217, N221, and S295. E307 contacts NADP(+).

It belongs to the ketopantoate reductase family.

The catalysed reaction is (R)-pantoate + NADP(+) = 2-dehydropantoate + NADPH + H(+). It functions in the pathway cofactor biosynthesis; (R)-pantothenate biosynthesis; (R)-pantoate from 3-methyl-2-oxobutanoate: step 2/2. In terms of biological role, catalyzes the NADPH-dependent reduction of ketopantoate into pantoic acid. This chain is Probable 2-dehydropantoate 2-reductase, found in Schizosaccharomyces pombe (strain 972 / ATCC 24843) (Fission yeast).